The sequence spans 216 residues: Ornithine decarboxylase antizyme 1 (216 aa).

This sequence belongs to the ODC antizyme family. As to quaternary structure, interacts with ODC1 and thereby sterically blocks ODC homodimerization.

In terms of biological role, ornithine decarboxylase (ODC) antizyme protein that negatively regulates ODC activity and intracellular polyamine biosynthesis and uptake in response to increased intracellular polyamine levels. Binds to ODC monomers, inhibiting the assembly of the functional ODC homodimer, and targets the monomers for ubiquitin-independent proteolytic destruction by the 26S proteasome. The sequence is that of Ornithine decarboxylase antizyme 1 (oaz1) from Xenopus laevis (African clawed frog).